Here is an 854-residue protein sequence, read N- to C-terminus: Nucleolar MIF4G domain-containing protein 1 homolog (854 aa).

Disordered stretches follow at residues 1 to 38, 55 to 105, 120 to 161, and 217 to 306; these read MAKI…FAGK, QSQL…DAEV, PLGK…KQRI, and RKWE…RDAE. A compositionally biased stretch (basic and acidic residues) spans 15–28; sequence TRKEQRKQKSEFKK. Residues 60 to 71 show a composition bias toward basic residues; that stretch reads KNKKKKRSKKPK. Positions 88–105 are enriched in acidic residues; sequence IDSDDDESIDSDFSDAEV. Composition is skewed to basic and acidic residues over residues 135 to 156 and 217 to 238; these read RQDE…ESKS and RKWE…KEEA. Residues 242 to 289 show a composition bias toward acidic residues; it reads SDEEEDKEDRDEPMDNFSEDDSGSEGEDDDEDLTGEEEQSEEDSEQEE. Residues 290–306 are compositionally biased toward basic and acidic residues; that stretch reads NAPKIKEDIYGRKRDAE. Residues 352–553 enclose the MIF4G domain; the sequence is LKQCKGLLNR…DILNAVKNNN (202 aa). One can recognise an MI domain in the interval 650–764; that stretch reads AERRNIFCII…QLSVLKVVDF (115 aa).

Belongs to the CWC22 family.

It is found in the nucleus. The protein resides in the nucleolus. The polypeptide is Nucleolar MIF4G domain-containing protein 1 homolog (Drosophila melanogaster (Fruit fly)).